A 355-amino-acid polypeptide reads, in one-letter code: Probable low-specificity L-threonine aldolase 2 (355 aa).

At lysine 211 the chain carries N6-(pyridoxal phosphate)lysine.

It belongs to the threonine aldolase family. It depends on pyridoxal 5'-phosphate as a cofactor. Expressed in roots, leaf vasculature and flowers.

It catalyses the reaction L-threonine = acetaldehyde + glycine. The enzyme catalyses L-allo-threonine = acetaldehyde + glycine. It participates in amino-acid degradation; L-threonine degradation via aldolase pathway; acetaldehyde and glycine from L-threonine: step 1/1. Its function is as follows. Threonine aldolase involved in threonine degradation to glycine. May play a role in the removal of L-allo-threonine. The protein is Probable low-specificity L-threonine aldolase 2 (THA2) of Arabidopsis thaliana (Mouse-ear cress).